The chain runs to 433 residues: Succinate--CoA ligase [GDP-forming] subunit beta, mitochondrial (433 aa).

A mitochondrion-targeting transit peptide spans 1 to 38; sequence MASPVAIAAQAGKLLRERALRPLLAVRSQAGHLTPRRW. The 229-residue stretch at 47-275 folds into the ATP-grasp domain; that stretch reads KKLMSEHGVR…NAEFRQKDIF (229 aa). Glutamine 58 contacts GTP. The residue at position 67 (lysine 67) is an N6-acetyllysine; alternate. Position 67 is an N6-succinyllysine; alternate (lysine 67). Lysine 74 is modified (N6-acetyllysine). Lysine 79 carries the post-translational modification N6-succinyllysine. 91–93 contacts GTP; that stretch reads GRG. N6-acetyllysine occurs at positions 112, 133, and 140. Leucine 147 provides a ligand contact to GTP. Residue serine 162 is modified to Phosphoserine. Residue lysine 201 is modified to N6-acetyllysine. Residue serine 217 is modified to Phosphoserine. 2 positions are modified to N6-acetyllysine: lysine 219 and lysine 228. Residues asparagine 244 and aspartate 258 each contribute to the Mg(2+) site. Lysine 272 is subject to N6-acetyllysine. Substrate is bound at residue asparagine 309. The residue at position 339 (lysine 339) is an N6-succinyllysine. Position 348 is an N6-acetyllysine (lysine 348). 366–368 contributes to the substrate binding site; that stretch reads GIV. 3 positions are modified to N6-acetyllysine: lysine 387, lysine 407, and lysine 424.

The protein belongs to the succinate/malate CoA ligase beta subunit family. GTP-specific subunit beta subfamily. Heterodimer of an alpha and a beta subunit. The beta subunit determines specificity for GTP. It depends on Mg(2+) as a cofactor.

It is found in the mitochondrion. The enzyme catalyses GTP + succinate + CoA = succinyl-CoA + GDP + phosphate. The protein operates within carbohydrate metabolism; tricarboxylic acid cycle; succinate from succinyl-CoA (ligase route): step 1/1. Functionally, GTP-specific succinyl-CoA synthetase functions in the citric acid cycle (TCA), coupling the hydrolysis of succinyl-CoA to the synthesis of GTP and thus represents the only step of substrate-level phosphorylation in the TCA. The beta subunit provides nucleotide specificity of the enzyme and binds the substrate succinate, while the binding sites for coenzyme A and phosphate are found in the alpha subunit. This Mus musculus (Mouse) protein is Succinate--CoA ligase [GDP-forming] subunit beta, mitochondrial.